The sequence spans 470 residues: Ribosomal protein uS12 methylthiotransferase RimO (470 aa).

An MTTase N-terminal domain is found at 33–143 (NKIGFVSLGC…VLEHVHQYAP (111 aa)). The [4Fe-4S] cluster site is built by Cys-42, Cys-78, Cys-107, Cys-175, Cys-179, and Cys-182. The 238-residue stretch at 161–398 (LTPKHYAYLK…MLVQQEISAA (238 aa)) folds into the Radical SAM core domain. Residues 401-467 (QKRIGSTMQV…EYDLWGSILH (67 aa)) form the TRAM domain.

This sequence belongs to the methylthiotransferase family. RimO subfamily. [4Fe-4S] cluster serves as cofactor.

The protein resides in the cytoplasm. It carries out the reaction L-aspartate(89)-[ribosomal protein uS12]-hydrogen + (sulfur carrier)-SH + AH2 + 2 S-adenosyl-L-methionine = 3-methylsulfanyl-L-aspartate(89)-[ribosomal protein uS12]-hydrogen + (sulfur carrier)-H + 5'-deoxyadenosine + L-methionine + A + S-adenosyl-L-homocysteine + 2 H(+). Functionally, catalyzes the methylthiolation of an aspartic acid residue of ribosomal protein uS12. The chain is Ribosomal protein uS12 methylthiotransferase RimO from Vibrio cholerae serotype O1 (strain ATCC 39315 / El Tor Inaba N16961).